Here is a 401-residue protein sequence, read N- to C-terminus: Acetylornithine aminotransferase (401 aa).

Residues 121 to 122 and Phe-154 contribute to the pyridoxal 5'-phosphate site; that span reads GA. Arg-157 is a N(2)-acetyl-L-ornithine binding site. Position 239 to 242 (239 to 242) interacts with pyridoxal 5'-phosphate; that stretch reads DEVQ. Lys-268 bears the N6-(pyridoxal phosphate)lysine mark. Ser-296 is a N(2)-acetyl-L-ornithine binding site. Thr-297 contacts pyridoxal 5'-phosphate.

This sequence belongs to the class-III pyridoxal-phosphate-dependent aminotransferase family. ArgD subfamily. In terms of assembly, homodimer. It depends on pyridoxal 5'-phosphate as a cofactor.

It is found in the cytoplasm. The catalysed reaction is N(2)-acetyl-L-ornithine + 2-oxoglutarate = N-acetyl-L-glutamate 5-semialdehyde + L-glutamate. It participates in amino-acid biosynthesis; L-arginine biosynthesis; N(2)-acetyl-L-ornithine from L-glutamate: step 4/4. The polypeptide is Acetylornithine aminotransferase (Myxococcus xanthus).